Reading from the N-terminus, the 135-residue chain is Small ribosomal subunit protein bS16 (135 aa).

Belongs to the bacterial ribosomal protein bS16 family.

This chain is Small ribosomal subunit protein bS16, found in Prosthecochloris aestuarii (strain DSM 271 / SK 413).